The chain runs to 20 residues: Large ribosomal subunit protein uL5 (20 aa).

Belongs to the universal ribosomal protein uL5 family. Part of the 50S ribosomal subunit; part of the 5S rRNA/L5/L18/L25 subcomplex. Contacts the 5S rRNA and the P site tRNA. Forms a bridge to the 30S subunit in the 70S ribosome.

Its function is as follows. This is one of the proteins that bind and probably mediate the attachment of the 5S RNA into the large ribosomal subunit, where it forms part of the central protuberance. In the 70S ribosome it contacts protein S13 of the 30S subunit (bridge B1b), connecting the two subunits; this bridge is implicated in subunit movement. Contacts the P site tRNA; the 5S rRNA and some of its associated proteins might help stabilize positioning of ribosome-bound tRNAs. This is Large ribosomal subunit protein uL5 (rplE) from Bacillus cereus.